A 652-amino-acid chain; its full sequence is DNA ligase (652 aa).

NAD(+) is bound by residues 29–33 (DSEYD), 78–79 (SL), and glutamate 107. The N6-AMP-lysine intermediate role is filled by lysine 109. 4 residues coordinate NAD(+): arginine 130, glutamate 164, lysine 278, and lysine 302. Residues cysteine 395, cysteine 398, cysteine 413, and cysteine 418 each coordinate Zn(2+). The BRCT domain occupies 577 to 652 (AADAVLSGKT…IQDEAWLEQL (76 aa)).

The protein belongs to the NAD-dependent DNA ligase family. LigA subfamily. Mg(2+) serves as cofactor. Mn(2+) is required as a cofactor.

It carries out the reaction NAD(+) + (deoxyribonucleotide)n-3'-hydroxyl + 5'-phospho-(deoxyribonucleotide)m = (deoxyribonucleotide)n+m + AMP + beta-nicotinamide D-nucleotide.. Functionally, DNA ligase that catalyzes the formation of phosphodiester linkages between 5'-phosphoryl and 3'-hydroxyl groups in double-stranded DNA using NAD as a coenzyme and as the energy source for the reaction. It is essential for DNA replication and repair of damaged DNA. This is DNA ligase from Streptococcus gordonii (strain Challis / ATCC 35105 / BCRC 15272 / CH1 / DL1 / V288).